The following is a 980-amino-acid chain: Valine--tRNA ligase (980 aa).

A 'HIGH' region motif is present at residues 43–53 (PNVTGTLHMGH). Positions 586–590 (KMSKS) match the 'KMSKS' region motif. Lysine 589 contacts ATP. Residues 914–980 (LVDMDAERMR…AGLREQRGKL (67 aa)) adopt a coiled-coil conformation.

It belongs to the class-I aminoacyl-tRNA synthetase family. ValS type 1 subfamily. In terms of assembly, monomer.

The protein localises to the cytoplasm. The catalysed reaction is tRNA(Val) + L-valine + ATP = L-valyl-tRNA(Val) + AMP + diphosphate. Its function is as follows. Catalyzes the attachment of valine to tRNA(Val). As ValRS can inadvertently accommodate and process structurally similar amino acids such as threonine, to avoid such errors, it has a 'posttransfer' editing activity that hydrolyzes mischarged Thr-tRNA(Val) in a tRNA-dependent manner. The sequence is that of Valine--tRNA ligase from Xanthomonas oryzae pv. oryzae (strain PXO99A).